We begin with the raw amino-acid sequence, 314 residues long: Olfactory receptor 5P68 (314 aa).

Topologically, residues 1–28 (MAFLHNGNHTAVTEFILLGLTDDPVFRV) are extracellular. Asn-8 carries an N-linked (GlcNAc...) asparagine glycan. The helical transmembrane segment at 29–49 (ILFTIILCIYLVTVSGNLSTI) threads the bilayer. The Cytoplasmic segment spans residues 50-57 (LLIRVSSQ). Residues 58–78 (LHHPMYFFLSHLASVDIGYSS) form a helical membrane-spanning segment. The Extracellular segment spans residues 79-102 (SVTPNMLANFLVEKNTISYLGCTI). Cysteines 100 and 192 form a disulfide. Residues 103-123 (QLSLAAFCGTVECFLLATMAY) form a helical membrane-spanning segment. The Cytoplasmic segment spans residues 124–136 (DRFMAICSPLLYS). A helical transmembrane segment spans residues 137–157 (TKMSTQVCIQLIVGSYIGGFL). Residues 158-199 (NASSFTLFFLSFLFCGPNRINHFYCDFAPLVALSCSDVSVSE) are Extracellular-facing. Residues 200-220 (VVTSFFSGSVTMITMLVIAIS) form a helical membrane-spanning segment. At 221–240 (YTYILITILKMRSTEGRHKA) the chain is on the cytoplasmic side. Residues 241 to 261 (FSTCTSHLTAVTLFYGTITFI) traverse the membrane as a helical segment. Residues 262-274 (YVMPKSSFSTDQN) lie on the Extracellular side of the membrane. The chain crosses the membrane as a helical span at residues 275-295 (KVVSVFYMVVIPMLNPLIYSL). Residues 296–314 (RNNEIKDALKRHLGKKIFS) are Cytoplasmic-facing.

The protein belongs to the G-protein coupled receptor 1 family.

Its subcellular location is the cell membrane. In terms of biological role, potential odorant receptor. The protein is Olfactory receptor 5P68 of Mus musculus (Mouse).